Here is a 188-residue protein sequence, read N- to C-terminus: D-glycero-beta-D-manno-heptose-1,7-bisphosphate 7-phosphatase (188 aa).

Zn(2+)-binding residues include cysteine 92, histidine 94, cysteine 107, and cysteine 109.

It belongs to the GmhB family.

It is found in the cytoplasm. It catalyses the reaction D-glycero-beta-D-manno-heptose 1,7-bisphosphate + H2O = D-glycero-beta-D-manno-heptose 1-phosphate + phosphate. It functions in the pathway nucleotide-sugar biosynthesis; ADP-L-glycero-beta-D-manno-heptose biosynthesis; ADP-L-glycero-beta-D-manno-heptose from D-glycero-beta-D-manno-heptose 7-phosphate: step 2/4. It participates in bacterial outer membrane biogenesis; LPS core biosynthesis. Converts the D-glycero-beta-D-manno-heptose 1,7-bisphosphate intermediate into D-glycero-beta-D-manno-heptose 1-phosphate by removing the phosphate group at the C-7 position. In Photorhabdus laumondii subsp. laumondii (strain DSM 15139 / CIP 105565 / TT01) (Photorhabdus luminescens subsp. laumondii), this protein is D-glycero-beta-D-manno-heptose-1,7-bisphosphate 7-phosphatase (gmhB1).